A 519-amino-acid chain; its full sequence is Sensory neuron membrane protein 2 (519 aa).

At 1–7 (MLAKHSK) the chain is on the cytoplasmic side. The helical transmembrane segment at 8-28 (LFFTGSVVFLIVAIVLASWGF) threads the bilayer. Residues 29–469 (PKIISTRIQK…DAHALLSYAQ (441 aa)) lie on the Extracellular side of the membrane. Residues Asn44, Asn67, Asn104, Asn166, Asn229, Asn272, and Asn314 are each glycosylated (N-linked (GlcNAc...) asparagine). Disulfide bonds link Cys268-Cys338, Cys299-Cys362, and Cys340-Cys351. The chain crosses the membrane as a helical span at residues 470–490 (LARWIILAAAIILAIIATITV). Topologically, residues 491–519 (ARSTSLISWPRNSNSVNFIIGPMVNDKMR) are cytoplasmic.

This sequence belongs to the CD36 family. In terms of tissue distribution, localizes to both male and female antennae but not the leg, wing, gut, head or thoracic ganglia. Detected throughout the sensory epithelium, associating with both sex-pheromone sensilla and plant-volatile sensilla. Differentially expressed among different sensilla and different neurons within a given sensillum.

Its subcellular location is the cell membrane. Its function is as follows. Plays an olfactory role that is not restricted to pheromone sensitivity. This is Sensory neuron membrane protein 2 from Manduca sexta (Tobacco hawkmoth).